The chain runs to 487 residues: Glutamyl-tRNA(Gln) amidotransferase subunit A (487 aa).

Catalysis depends on charge relay system residues K78 and S153. S177 (acyl-ester intermediate) is an active-site residue.

It belongs to the amidase family. GatA subfamily. In terms of assembly, heterotrimer of A, B and C subunits.

It carries out the reaction L-glutamyl-tRNA(Gln) + L-glutamine + ATP + H2O = L-glutaminyl-tRNA(Gln) + L-glutamate + ADP + phosphate + H(+). In terms of biological role, allows the formation of correctly charged Gln-tRNA(Gln) through the transamidation of misacylated Glu-tRNA(Gln) in organisms which lack glutaminyl-tRNA synthetase. The reaction takes place in the presence of glutamine and ATP through an activated gamma-phospho-Glu-tRNA(Gln). In Oenococcus oeni (strain ATCC BAA-331 / PSU-1), this protein is Glutamyl-tRNA(Gln) amidotransferase subunit A.